A 636-amino-acid chain; its full sequence is uncharacterized protein (636 aa).

A DNA-binding region (zn(2)-C6 fungal-type) is located at residues 10 to 36 (CLACRRKKVKCNRQYPCTRCLKYGEAC). The span at 556 to 580 (NSQSTSEFVSPISDTENGSSSQQVS) shows a compositional bias: polar residues. The interval 556 to 581 (NSQSTSEFVSPISDTENGSSSQQVSE) is disordered.

The protein resides in the cytoplasm. The protein localises to the nucleus. This is an uncharacterized protein from Schizosaccharomyces pombe (strain 972 / ATCC 24843) (Fission yeast).